A 358-amino-acid polypeptide reads, in one-letter code: UDP-N-acetylglucosamine--N-acetylmuramyl-(pentapeptide) pyrophosphoryl-undecaprenol N-acetylglucosamine transferase (358 aa).

UDP-N-acetyl-alpha-D-glucosamine-binding positions include 11–13 (TGG), asparagine 120, arginine 161, serine 188, and glutamine 282.

The protein belongs to the glycosyltransferase 28 family. MurG subfamily.

The protein localises to the cell inner membrane. It catalyses the reaction di-trans,octa-cis-undecaprenyl diphospho-N-acetyl-alpha-D-muramoyl-L-alanyl-D-glutamyl-meso-2,6-diaminopimeloyl-D-alanyl-D-alanine + UDP-N-acetyl-alpha-D-glucosamine = di-trans,octa-cis-undecaprenyl diphospho-[N-acetyl-alpha-D-glucosaminyl-(1-&gt;4)]-N-acetyl-alpha-D-muramoyl-L-alanyl-D-glutamyl-meso-2,6-diaminopimeloyl-D-alanyl-D-alanine + UDP + H(+). It participates in cell wall biogenesis; peptidoglycan biosynthesis. In terms of biological role, cell wall formation. Catalyzes the transfer of a GlcNAc subunit on undecaprenyl-pyrophosphoryl-MurNAc-pentapeptide (lipid intermediate I) to form undecaprenyl-pyrophosphoryl-MurNAc-(pentapeptide)GlcNAc (lipid intermediate II). The sequence is that of UDP-N-acetylglucosamine--N-acetylmuramyl-(pentapeptide) pyrophosphoryl-undecaprenol N-acetylglucosamine transferase from Synechococcus sp. (strain WH7803).